Here is a 449-residue protein sequence, read N- to C-terminus: Hyaluronidase-1 (449 aa).

A signal peptide spans methionine 1–valine 23. Intrachain disulfides connect cysteine 47–cysteine 340 and cysteine 211–cysteine 227. Asparagine 67, asparagine 103, and asparagine 111 each carry an N-linked (GlcNAc...) asparagine glycan. The active-site Proton donor is glutamate 135. An N-linked (GlcNAc...) asparagine glycan is attached at asparagine 153. Residue asparagine 357 is glycosylated (N-linked (GlcNAc...) asparagine). Intrachain disulfides connect cysteine 365/cysteine 376, cysteine 370/cysteine 427, and cysteine 429/cysteine 438. An N-linked (GlcNAc...) asparagine glycan is attached at asparagine 401. An EGF-like domain is found at cysteine 427–cysteine 438.

It belongs to the glycosyl hydrolase 56 family. In terms of assembly, monomer. Expressed by the venom gland.

Its subcellular location is the secreted. It carries out the reaction Random hydrolysis of (1-&gt;4)-linkages between N-acetyl-beta-D-glucosamine and D-glucuronate residues in hyaluronate.. Functionally, snake venom endo-hyaluronidase that degrades hyaluronan to smaller oligosaccharide fragments. In venom, it is not toxic by itself, but increases the diffusion of other venom proteins by degrading the extracellular matrix. In addition, it displays antiedematogenic activity. The chain is Hyaluronidase-1 from Cerastes cerastes (Horned desert viper).